The sequence spans 318 residues: Thymidylate synthase (318 aa).

Residues R25 and 180-181 (RR) contribute to the dUMP site. Catalysis depends on C200, which acts as the Nucleophile. DUMP contacts are provided by residues 220–223 (RSGD), N231, and 261–263 (HIY). A (6R)-5,10-methylene-5,6,7,8-tetrahydrofolate-binding site is contributed by D223. A317 is a (6R)-5,10-methylene-5,6,7,8-tetrahydrofolate binding site.

This sequence belongs to the thymidylate synthase family. Bacterial-type ThyA subfamily. In terms of assembly, homodimer.

It localises to the cytoplasm. The catalysed reaction is dUMP + (6R)-5,10-methylene-5,6,7,8-tetrahydrofolate = 7,8-dihydrofolate + dTMP. It participates in pyrimidine metabolism; dTTP biosynthesis. Catalyzes the reductive methylation of 2'-deoxyuridine-5'-monophosphate (dUMP) to 2'-deoxythymidine-5'-monophosphate (dTMP) while utilizing 5,10-methylenetetrahydrofolate (mTHF) as the methyl donor and reductant in the reaction, yielding dihydrofolate (DHF) as a by-product. This enzymatic reaction provides an intracellular de novo source of dTMP, an essential precursor for DNA biosynthesis. In Bacillus cytotoxicus (strain DSM 22905 / CIP 110041 / 391-98 / NVH 391-98), this protein is Thymidylate synthase.